The sequence spans 118 residues: V-type proton ATPase subunit G 3 (118 aa).

Residues 1 to 12 are compositionally biased toward polar residues; that stretch reads MASQSQGIQQLL. The disordered stretch occupies residues 1-37; it reads MASQSQGIQQLLQAEKRAKDKLEEAKKRKNKRLRQAK. Positions 3–53 form a coiled coil; that stretch reads SQSQGIQQLLQAEKRAKDKLEEAKKRKNKRLRQAKEEATADIDQYRLKREG. Basic and acidic residues predominate over residues 14–26; the sequence is AEKRAKDKLEEAK.

Belongs to the V-ATPase G subunit family. V-ATPase is a heteromultimeric enzyme made up of two complexes: the ATP-hydrolytic V1 complex and the proton translocation V0 complex. The V1 complex consists of three catalytic AB heterodimers that form a heterohexamer, three peripheral stalks each consisting of EG heterodimers, one central rotor including subunits D and F, and the regulatory subunits C and H. The proton translocation complex V0 consists of the proton transport subunit a, a ring of proteolipid subunits c9c'', rotary subunit d, subunits e and f, and two accessory subunits.

Subunit of the V1 complex of vacuolar(H+)-ATPase (V-ATPase), a multisubunit enzyme composed of a peripheral complex (V1) that hydrolyzes ATP and a membrane integral complex (V0) that translocates protons. V-ATPase is responsible for acidifying and maintaining the pH of intracellular compartments and in some cell types, is targeted to the plasma membrane, where it is responsible for acidifying the extracellular environment. This chain is V-type proton ATPase subunit G 3 (atp6v1g3), found in Xenopus tropicalis (Western clawed frog).